A 397-amino-acid chain; its full sequence is Carbamoyl phosphate synthase small chain (397 aa).

The segment at 1-204 is CPSase; it reads MKHVLRKEKT…NAKLKEKIWH (204 aa). L-glutamine is bound by residues Ser57, Gly252, and Gly254. The 188-residue stretch at 204 to 391 folds into the Glutamine amidotransferase type-1 domain; that stretch reads HVVVYDFGVK…IKLMKKSYNS (188 aa). The active-site Nucleophile is Cys280. The L-glutamine site is built by Leu281, Gln284, Asn322, and Tyr325. Catalysis depends on residues His364 and Glu366.

It belongs to the CarA family. Composed of two chains; the small (or glutamine) chain promotes the hydrolysis of glutamine to ammonia, which is used by the large (or ammonia) chain to synthesize carbamoyl phosphate. Tetramer of heterodimers (alpha,beta)4.

The catalysed reaction is hydrogencarbonate + L-glutamine + 2 ATP + H2O = carbamoyl phosphate + L-glutamate + 2 ADP + phosphate + 2 H(+). It carries out the reaction L-glutamine + H2O = L-glutamate + NH4(+). It participates in amino-acid biosynthesis; L-arginine biosynthesis; carbamoyl phosphate from bicarbonate: step 1/1. The protein operates within pyrimidine metabolism; UMP biosynthesis via de novo pathway; (S)-dihydroorotate from bicarbonate: step 1/3. Small subunit of the glutamine-dependent carbamoyl phosphate synthetase (CPSase). CPSase catalyzes the formation of carbamoyl phosphate from the ammonia moiety of glutamine, carbonate, and phosphate donated by ATP, constituting the first step of 2 biosynthetic pathways, one leading to arginine and/or urea and the other to pyrimidine nucleotides. The small subunit (glutamine amidotransferase) binds and cleaves glutamine to supply the large subunit with the substrate ammonia. In Buchnera aphidicola subsp. Baizongia pistaciae (strain Bp), this protein is Carbamoyl phosphate synthase small chain.